A 55-amino-acid chain; its full sequence is ATP synthase F(0) complex subunit 8 (55 aa).

Residues 9–29 (WFAIMVFSWFVFLIFLPPKIM) form a helical membrane-spanning segment.

This sequence belongs to the ATPase protein 8 family. Component of the ATP synthase complex composed at least of ATP5F1A/subunit alpha, ATP5F1B/subunit beta, ATP5MC1/subunit c (homooctomer), MT-ATP6/subunit a, MT-ATP8/subunit 8, ATP5ME/subunit e, ATP5MF/subunit f, ATP5MG/subunit g, ATP5MK/subunit k, ATP5MJ/subunit j, ATP5F1C/subunit gamma, ATP5F1D/subunit delta, ATP5F1E/subunit epsilon, ATP5PF/subunit F6, ATP5PB/subunit b, ATP5PD/subunit d, ATP5PO/subunit OSCP. ATP synthase complex consists of a soluble F(1) head domain (subunits alpha(3) and beta(3)) - the catalytic core - and a membrane F(0) domain - the membrane proton channel (subunits c, a, 8, e, f, g, k and j). These two domains are linked by a central stalk (subunits gamma, delta, and epsilon) rotating inside the F1 region and a stationary peripheral stalk (subunits F6, b, d, and OSCP).

It is found in the mitochondrion membrane. Its function is as follows. Subunit 8, of the mitochondrial membrane ATP synthase complex (F(1)F(0) ATP synthase or Complex V) that produces ATP from ADP in the presence of a proton gradient across the membrane which is generated by electron transport complexes of the respiratory chain. ATP synthase complex consist of a soluble F(1) head domain - the catalytic core - and a membrane F(1) domain - the membrane proton channel. These two domains are linked by a central stalk rotating inside the F(1) region and a stationary peripheral stalk. During catalysis, ATP synthesis in the catalytic domain of F(1) is coupled via a rotary mechanism of the central stalk subunits to proton translocation. In vivo, can only synthesize ATP although its ATP hydrolase activity can be activated artificially in vitro. Part of the complex F(0) domain. This Tetraodon nigroviridis (Spotted green pufferfish) protein is ATP synthase F(0) complex subunit 8.